Reading from the N-terminus, the 668-residue chain is Protein PLASTID TRANSCRIPTIONALLY ACTIVE 10 (668 aa).

The N-terminal 40 residues, 1–40 (MQICQTKLNFTFPNPTNPNFCKPKALQWSPPRRISLLPCR), are a transit peptide targeting the chloroplast. In terms of domain architecture, S1 motif spans 272-340 (GMVCEGTVTT…YRFRFPLELR (69 aa)). Basic and acidic residues predominate over residues 362–391 (RDGDTNPDEIRRDCGRPPEPRKDPGSKPEE). A disordered region spans residues 362-394 (RDGDTNPDEIRRDCGRPPEPRKDPGSKPEEEGL). Position 434 is a phosphoserine (Ser434). The segment at 611 to 668 (KRKEGSTLASQEEETESEEEEEDDDDFDDFDYSILSDESSIGYSEQQPLVNGTQVLTD) is disordered. A compositionally biased stretch (acidic residues) spans 621–641 (QEEETESEEEEEDDDDFDDFD). The span at 646-668 (SDESSIGYSEQQPLVNGTQVLTD) shows a compositional bias: polar residues.

In terms of assembly, component of the transcriptionally active chromosome (TAC) complexes. Interacts with PTAC7.

It localises to the plastid. Its subcellular location is the chloroplast. The chain is Protein PLASTID TRANSCRIPTIONALLY ACTIVE 10 from Arabidopsis thaliana (Mouse-ear cress).